The sequence spans 241 residues: Ribose-5-phosphate isomerase A (241 aa).

Residues 28–31, 83–86, and 96–99 contribute to the substrate site; these read TGST, DGAD, and KGGG. The active-site Proton acceptor is the Glu-105. Lys-123 contacts substrate.

The protein belongs to the ribose 5-phosphate isomerase family. As to quaternary structure, homodimer.

It catalyses the reaction aldehydo-D-ribose 5-phosphate = D-ribulose 5-phosphate. It functions in the pathway carbohydrate degradation; pentose phosphate pathway; D-ribose 5-phosphate from D-ribulose 5-phosphate (non-oxidative stage): step 1/1. Catalyzes the reversible conversion of ribose-5-phosphate to ribulose 5-phosphate. This Rhodopseudomonas palustris (strain BisA53) protein is Ribose-5-phosphate isomerase A.